The sequence spans 1377 residues: DNA-directed RNA polymerase subunit beta' (1377 aa).

Cys60, Cys62, Cys75, and Cys78 together coordinate Zn(2+). Asp449, Asp451, and Asp453 together coordinate Mg(2+). Zn(2+) is bound by residues Cys777, Cys851, Cys858, and Cys861.

Belongs to the RNA polymerase beta' chain family. In terms of assembly, the RNAP catalytic core consists of 2 alpha, 1 beta, 1 beta' and 1 omega subunit. When a sigma factor is associated with the core the holoenzyme is formed, which can initiate transcription. It depends on Mg(2+) as a cofactor. Zn(2+) serves as cofactor.

It catalyses the reaction RNA(n) + a ribonucleoside 5'-triphosphate = RNA(n+1) + diphosphate. In terms of biological role, DNA-dependent RNA polymerase catalyzes the transcription of DNA into RNA using the four ribonucleoside triphosphates as substrates. In Borrelia hermsii (strain HS1 / DAH), this protein is DNA-directed RNA polymerase subunit beta'.